The chain runs to 269 residues: Capsid assembly scaffolding protein (269 aa).

This sequence belongs to the T4likevirus capsid assembly scaffolding protein family.

It localises to the virion. In terms of biological role, scaffolding protein involved in the icosahedric procapsid assembly. Coassembles with the capsid proteins to form the procapsid, in which the scaffolding protein is found within the external shell of icosahedrally arranged capsid protein subunits. In a subsequent step the scaffolding protein molecules are cleaved by the viral protease and released, except for the internal peptide VII. Functionally, cleavage product of Gp22 that is incorporated into the mature phage head. This is Capsid assembly scaffolding protein (22) from Escherichia phage AR1 (Bacteriophage AR1).